An 872-amino-acid chain; its full sequence is Cellulose synthase catalytic subunit [UDP-forming] (872 aa).

The next 4 helical transmembrane spans lie at S30 to L50, I151 to F171, P173 to M193, and L230 to G250. Residues L271 to V364 are catalytic subdomain A. The active site involves D313. D360 and D362 together coordinate substrate. The catalytic subdomain B stretch occupies residues K441–M501. Residue D457 is part of the active site. 5 consecutive transmembrane segments (helical) span residues V525 to L545, F547 to L567, I592 to P612, I640 to G660, and V668 to V688. The PilZ domain occupies Q694 to F790. The chain crosses the membrane as a helical span at residues S833–P853.

The protein belongs to the glycosyltransferase 2 family. Mg(2+) is required as a cofactor.

The protein resides in the cell inner membrane. It catalyses the reaction [(1-&gt;4)-beta-D-glucosyl](n) + UDP-alpha-D-glucose = [(1-&gt;4)-beta-D-glucosyl](n+1) + UDP + H(+). It participates in glycan metabolism; bacterial cellulose biosynthesis. With respect to regulation, activated by bis-(3'-5') cyclic diguanylic acid (c-di-GMP). Catalytic subunit of cellulose synthase. It polymerizes uridine 5'-diphosphate glucose to cellulose, which is produced as an extracellular component for mechanical and chemical protection at the onset of the stationary phase, when the cells exhibit multicellular behavior (rdar morphotype). Coexpression of cellulose and thin aggregative fimbriae leads to a hydrophobic network with tightly packed cells embedded in a highly inert matrix. This is Cellulose synthase catalytic subunit [UDP-forming] (bcsA) from Escherichia coli O157:H7.